The primary structure comprises 267 residues: Type III pantothenate kinase (267 aa).

6–13 (DVRNTHTT) contributes to the ATP binding site. Residue 109–112 (GADR) participates in substrate binding. The Proton acceptor role is filled by Asp111. Residue Asp131 participates in K(+) binding. Residue Ser134 participates in ATP binding. Thr186 contacts substrate.

The protein belongs to the type III pantothenate kinase family. Homodimer. It depends on NH4(+) as a cofactor. K(+) is required as a cofactor.

The protein localises to the cytoplasm. The enzyme catalyses (R)-pantothenate + ATP = (R)-4'-phosphopantothenate + ADP + H(+). It participates in cofactor biosynthesis; coenzyme A biosynthesis; CoA from (R)-pantothenate: step 1/5. Functionally, catalyzes the phosphorylation of pantothenate (Pan), the first step in CoA biosynthesis. The chain is Type III pantothenate kinase from Mycobacterium sp. (strain JLS).